The following is a 320-amino-acid chain: Olfactory receptor 2C3 (320 aa).

At 1-26 the chain is on the extracellular side; the sequence is MMEIANVSSPEVFVLLGFSTRPSLET. Residue N6 is glycosylated (N-linked (GlcNAc...) asparagine). Residues 27–50 traverse the membrane as a helical segment; sequence VLFIVVLSFYMVSILGNGIIILVS. Over 51 to 58 the chain is Cytoplasmic; that stretch reads HTDVHLHT. Residues 59–80 form a helical membrane-spanning segment; it reads PMYFFLANLPFLDMSFTTSIVP. Topologically, residues 81–101 are extracellular; it reads QLLANLWGPQKTISYGGCVVQ. C98 and C190 are joined by a disulfide. The chain crosses the membrane as a helical span at residues 102 to 121; sequence FYISHWLGATECVLLATMSY. Residues 122–140 lie on the Cytoplasmic side of the membrane; it reads DRYAAICRPLHYTVIMHPQ. The helical transmembrane segment at 141–159 threads the bilayer; that stretch reads LCLGLALASWLGGLTTSMV. Over 160 to 196 the chain is Extracellular; it reads GSTLTMLLPLCGNNCIDHFFCEMPLIMQLACVDTSLN. Residues 197–220 traverse the membrane as a helical segment; it reads EMEMYLASFVFVVLPLGLILVSYG. The Cytoplasmic segment spans residues 221–237; the sequence is HIARAVLKIRSAEGRRK. Residues 238–260 form a helical membrane-spanning segment; it reads AFNTCSSHVAVVSLFYGSIIFMY. The Extracellular segment spans residues 261–273; the sequence is LQPAKSTSHEQGK. Residues 274 to 293 form a helical membrane-spanning segment; sequence FIALFYTVVTPALNPLIYTL. Over 294-320 the chain is Cytoplasmic; that stretch reads RNTEVKSALRHMVLENCCGSAGKLAQI.

Belongs to the G-protein coupled receptor 1 family.

It localises to the cell membrane. In terms of biological role, odorant receptor. This is Olfactory receptor 2C3 (OR2C3) from Homo sapiens (Human).